A 617-amino-acid polypeptide reads, in one-letter code: Proline--tRNA ligase (617 aa).

This sequence belongs to the class-II aminoacyl-tRNA synthetase family. ProS type 1 subfamily. In terms of assembly, homodimer.

Its subcellular location is the cytoplasm. It catalyses the reaction tRNA(Pro) + L-proline + ATP = L-prolyl-tRNA(Pro) + AMP + diphosphate. Its function is as follows. Catalyzes the attachment of proline to tRNA(Pro) in a two-step reaction: proline is first activated by ATP to form Pro-AMP and then transferred to the acceptor end of tRNA(Pro). As ProRS can inadvertently accommodate and process non-cognate amino acids such as alanine and cysteine, to avoid such errors it has two additional distinct editing activities against alanine. One activity is designated as 'pretransfer' editing and involves the tRNA(Pro)-independent hydrolysis of activated Ala-AMP. The other activity is designated 'posttransfer' editing and involves deacylation of mischarged Ala-tRNA(Pro). The misacylated Cys-tRNA(Pro) is not edited by ProRS. In Streptococcus pneumoniae (strain Hungary19A-6), this protein is Proline--tRNA ligase.